The chain runs to 194 residues: Peptidyl-tRNA hydrolase (194 aa).

Tyr-16 contacts tRNA. The active-site Proton acceptor is His-21. TRNA is bound by residues Phe-67, Asn-69, and Asn-115.

The protein belongs to the PTH family. Monomer.

It localises to the cytoplasm. The catalysed reaction is an N-acyl-L-alpha-aminoacyl-tRNA + H2O = an N-acyl-L-amino acid + a tRNA + H(+). Its function is as follows. Hydrolyzes ribosome-free peptidyl-tRNAs (with 1 or more amino acids incorporated), which drop off the ribosome during protein synthesis, or as a result of ribosome stalling. In terms of biological role, catalyzes the release of premature peptidyl moieties from peptidyl-tRNA molecules trapped in stalled 50S ribosomal subunits, and thus maintains levels of free tRNAs and 50S ribosomes. In Shigella boydii serotype 4 (strain Sb227), this protein is Peptidyl-tRNA hydrolase.